The primary structure comprises 241 residues: Proteasome subunit alpha type-5 (241 aa).

Belongs to the peptidase T1A family. In terms of assembly, the 26S proteasome consists of a 20S proteasome core and two 19S regulatory subunits. The 20S proteasome core is composed of 28 subunits that are arranged in four stacked rings, resulting in a barrel-shaped structure. The two end rings are each formed by seven alpha subunits, and the two central rings are each formed by seven beta subunits. The catalytic chamber with the active sites is on the inside of the barrel.

Its subcellular location is the cytoplasm. It localises to the nucleus. The proteasome is a multicatalytic proteinase complex which is characterized by its ability to cleave peptides with Arg, Phe, Tyr, Leu, and Glu adjacent to the leaving group at neutral or slightly basic pH. The proteasome has an ATP-dependent proteolytic activity. In Dictyostelium discoideum (Social amoeba), this protein is Proteasome subunit alpha type-5 (psmA5).